Here is a 276-residue protein sequence, read N- to C-terminus: Rhomboid protease GlpG (276 aa).

6 helical membrane passes run 94 to 114 (GPVT…MQIL), 142 to 162 (ALMH…WYLG), 169 to 189 (LGSG…GYVQ), 192 to 212 (FSGP…GYVW), 229 to 249 (LIIF…GMSM), and 250 to 270 (ANGA…VDSL). Ser-201 serves as the catalytic Nucleophile. His-254 is an active-site residue.

This sequence belongs to the peptidase S54 family.

Its subcellular location is the cell inner membrane. It carries out the reaction Cleaves type-1 transmembrane domains using a catalytic dyad composed of serine and histidine that are contributed by different transmembrane domains.. In terms of biological role, rhomboid-type serine protease that catalyzes intramembrane proteolysis. The sequence is that of Rhomboid protease GlpG from Shigella boydii serotype 4 (strain Sb227).